Here is a 438-residue protein sequence, read N- to C-terminus: Serine hydroxymethyltransferase 1 (438 aa).

Residues Leu-130 and 134-136 (GHL) each bind (6S)-5,6,7,8-tetrahydrofolate. The residue at position 239 (Lys-239) is an N6-(pyridoxal phosphate)lysine.

It belongs to the SHMT family. In terms of assembly, homodimer. The cofactor is pyridoxal 5'-phosphate.

The protein localises to the cytoplasm. The enzyme catalyses (6R)-5,10-methylene-5,6,7,8-tetrahydrofolate + glycine + H2O = (6S)-5,6,7,8-tetrahydrofolate + L-serine. It participates in one-carbon metabolism; tetrahydrofolate interconversion. The protein operates within amino-acid biosynthesis; glycine biosynthesis; glycine from L-serine: step 1/1. Catalyzes the reversible interconversion of serine and glycine with tetrahydrofolate (THF) serving as the one-carbon carrier. This reaction serves as the major source of one-carbon groups required for the biosynthesis of purines, thymidylate, methionine, and other important biomolecules. Also exhibits THF-independent aldolase activity toward beta-hydroxyamino acids, producing glycine and aldehydes, via a retro-aldol mechanism. Thus, is able to catalyze the cleavage of L-allo-threonine. The protein is Serine hydroxymethyltransferase 1 of Mycobacterium tuberculosis (strain ATCC 25618 / H37Rv).